The sequence spans 650 residues: Probable E3 ubiquitin ligase complex SCF subunit scon-2 (650 aa).

The 47-residue stretch at 124–170 folds into the F-box domain; the sequence is IDFISALPVELAQKVLCYLDTVSLTKAAQVSQRWRTLADSDAVWVRM. The disordered stretch occupies residues 200–244; that stretch reads QRQLAKGGPQGRVTELADSHDSQDRSVNQHGKRPAAEAEEEDPIK. The span at 214–223 shows a compositional bias: basic and acidic residues; sequence ELADSHDSQD. WD repeat units follow at residues 292 to 320, 332 to 360, 372 to 400, 411 to 441, and 453 to 488; these read GHENGVTCLQLDDNILATGSYDTTIKIWN, GHTAGIRALQFDDSKLISGSLDHTIKVWN, AHTDSVISVHFDGHLLASGSSDKTVKIFD, GHSDWVNSTHVDIKSRTVFSASDDTTIKLWD, and GHVGHVQQVLILPPEYEPDEEVLNGASQDNQDAMSV. The segment at 482-525 is disordered; the sequence is NQDAMSVSSGGSGSPSMSHAQIERAGSPGSHSSSHNLLPSSLPS. Low complexity-rich tracts occupy residues 487–499 and 507–525; these read SVSSGGSGSPSMS and GSPGSHSSSHNLLPSSLPS. WD repeat units lie at residues 528-564, 576-604, and 616-644; these read EDVRHLYGSAFVADESRPLPPRYFMTGGLDSTMRLWD, GHLEGVWSLAGDTIRVISGANDGMVKTWE, and GHCGPVTCVGLSDSLMASGSEDGTIRLHS.

Belongs to the WD repeat MET30/SCONB/SCON-2 family. In terms of assembly, component of the SCF(scon-2) E3 ubiquitin ligase complex.

It functions in the pathway protein modification; protein ubiquitination. Component of the SCF(scon-2) E3 ubiquitin ligase complex involved in the regulation of sulfur metabolite repression, probably by mediating the inactivation or degradation of the metR transcription factor. The chain is Probable E3 ubiquitin ligase complex SCF subunit scon-2 (scon-2) from Neurospora crassa (strain ATCC 24698 / 74-OR23-1A / CBS 708.71 / DSM 1257 / FGSC 987).